The primary structure comprises 337 residues: Inositol 2-dehydrogenase (337 aa).

The protein belongs to the Gfo/Idh/MocA family. In terms of assembly, homotetramer.

The enzyme catalyses myo-inositol + NAD(+) = scyllo-inosose + NADH + H(+). Functionally, involved in the oxidation of myo-inositol (MI) to 2-keto-myo-inositol (2KMI or 2-inosose). This is Inositol 2-dehydrogenase from Burkholderia lata (strain ATCC 17760 / DSM 23089 / LMG 22485 / NCIMB 9086 / R18194 / 383).